We begin with the raw amino-acid sequence, 105 residues long: Thioredoxin (105 aa).

Residues 1-105 (MANNVMDSSF…SLLDWINKSI (105 aa)) enclose the Thioredoxin domain. The cysteines at positions 30 and 33 are disulfide-linked.

The protein belongs to the thioredoxin family.

In terms of biological role, component of the thioredoxin-thioredoxin reductase system. Participates in various redox reactions through the reversible oxidation of its active center dithiol to a disulfide and catalyzes dithiol-disulfide exchange reactions. The polypeptide is Thioredoxin (trxA) (Rickettsia conorii (strain ATCC VR-613 / Malish 7)).